A 340-amino-acid polypeptide reads, in one-letter code: Ketol-acid reductoisomerase (NADP(+)) (340 aa).

Positions M1 to T182 constitute a KARI N-terminal Rossmann domain. NADP(+)-binding positions include Y24–Q27, R48, S51, S53, and D83–Q86. H108 is a catalytic residue. G134 lines the NADP(+) pocket. The 147-residue stretch at N183–I329 folds into the KARI C-terminal knotted domain. Mg(2+)-binding residues include D191, E195, E227, and E231. Residue S252 participates in substrate binding.

It belongs to the ketol-acid reductoisomerase family. The cofactor is Mg(2+).

The enzyme catalyses (2R)-2,3-dihydroxy-3-methylbutanoate + NADP(+) = (2S)-2-acetolactate + NADPH + H(+). The catalysed reaction is (2R,3R)-2,3-dihydroxy-3-methylpentanoate + NADP(+) = (S)-2-ethyl-2-hydroxy-3-oxobutanoate + NADPH + H(+). The protein operates within amino-acid biosynthesis; L-isoleucine biosynthesis; L-isoleucine from 2-oxobutanoate: step 2/4. Its pathway is amino-acid biosynthesis; L-valine biosynthesis; L-valine from pyruvate: step 2/4. Functionally, involved in the biosynthesis of branched-chain amino acids (BCAA). Catalyzes an alkyl-migration followed by a ketol-acid reduction of (S)-2-acetolactate (S2AL) to yield (R)-2,3-dihydroxy-isovalerate. In the isomerase reaction, S2AL is rearranged via a Mg-dependent methyl migration to produce 3-hydroxy-3-methyl-2-ketobutyrate (HMKB). In the reductase reaction, this 2-ketoacid undergoes a metal-dependent reduction by NADPH to yield (R)-2,3-dihydroxy-isovalerate. The sequence is that of Ketol-acid reductoisomerase (NADP(+)) from Roseobacter denitrificans (strain ATCC 33942 / OCh 114) (Erythrobacter sp. (strain OCh 114)).